The primary structure comprises 503 residues: Puromycin resistance protein pur8 (503 aa).

Residues 1-24 (MARKPDISAVPVESAACQGPDPRR) lie on the Cytoplasmic side of the membrane. A helical transmembrane segment spans residues 25-45 (WWGLVVILAAQLLVVLDGTVV). Over 46 to 64 (NIALPSVQRDLGMSDTSRQ) the chain is Extracellular. Residues 65 to 85 (WVITAYTLAFGGLLLLGGRVA) form a helical membrane-spanning segment. The Cytoplasmic segment spans residues 86 to 92 (DAFGRRR). A helical transmembrane segment spans residues 93-113 (IFAVGILGFGLASLLGGAAPD). Residues 114–122 (PGTLFLARA) are Extracellular-facing. Residues 123–143 (LQGVFAAALAPAALALINTLF) form a helical membrane-spanning segment. At 144-152 (TEPGERGKA) the chain is on the cytoplasmic side. Residues 153 to 173 (FGVYGAVSGGGAAVGLLAGGL) traverse the membrane as a helical segment. The Extracellular portion of the chain corresponds to 174-181 (LTEYLDWR). A helical membrane pass occupies residues 182-202 (WCLYVNAPVALLALLGCRLLP). Residues 203–212 (RDRRTGRAVR) lie on the Cytoplasmic side of the membrane. A helical membrane pass occupies residues 213–233 (LDLPGTLLGCGGLVAIVYAFA). Residues 234–241 (EAESGWGD) lie on the Extracellular side of the membrane. Residues 242–262 (PLVVRLLVLGVLMLVAFALVE) form a helical membrane-spanning segment. Over 263–280 (RRVQDPLLPPGVVAHRVR) the chain is Cytoplasmic. A helical transmembrane segment spans residues 281–301 (GGSFLVVGLPQIGLFGLFLFL). At 302 to 313 (TYYLQGILDYSP) the chain is on the extracellular side. A helical membrane pass occupies residues 314–334 (VLTGVAFLPLGLGIAVGSSLI). The Cytoplasmic segment spans residues 335–346 (AARLLPRTRPRT). The helical transmembrane segment at 347 to 367 (LIVGALLAAAAGMALLTRLEP) threads the bilayer. Residues 368 to 371 (DTPQ) lie on the Extracellular side of the membrane. A helical membrane pass occupies residues 372-392 (VYLTHLLPAQILIGLGIGCMM). Over 393–422 (MPAMHTATARVAPHEAGAAAAVVNSAQQVG) the chain is Cytoplasmic. A helical transmembrane segment spans residues 423–443 (GALGVALLNTVSTGATAAYLA). The Extracellular portion of the chain corresponds to 444–461 (DHGTSPAATVDGTVHGYT). Residues 462-482 (VAIAFAVGVLLLTAVLAWVLI) form a helical membrane-spanning segment. Residues 483–503 (DSRTEAADETGSASVTPARPR) lie on the Cytoplasmic side of the membrane.

This sequence belongs to the major facilitator superfamily. EmrB family.

It localises to the cell membrane. Its function is as follows. May be involved in active puromycin efflux energized by a proton-dependent electrochemical gradient. In addition, it could be implicated in secreting N-acetylpuromycin, the last intermediate of the puromycin biosynthesis pathway, to the environment. This chain is Puromycin resistance protein pur8 (pur8), found in Streptomyces alboniger.